Here is a 310-residue protein sequence, read N- to C-terminus: E3 ubiquitin-protein ligase CSU1 (310 aa).

Residues 43–67 (CSLCLKPFIDPMCCHKGHVFCRECI) form an RING-type 1; degenerate zinc finger. Positions 75–95 (KKDIQRRLAAHSSQKKQDKDE) form a coiled coil. A disordered region spans residues 110-138 (EFDQQNHSAMPRNSDKNHNEDKNGFHGAN). The span at 122-133 (NSDKNHNEDKNG) shows a compositional bias: basic and acidic residues. The RING-type 2 zinc finger occupies 221–263 (CPSCKVTLTNTMSLVALSSCGHVFCKKCAEKFMPVDKVCLVCD).

It belongs to the NOSIP family.

The protein localises to the nucleus. Its subcellular location is the nucleus speckle. It catalyses the reaction S-ubiquitinyl-[E2 ubiquitin-conjugating enzyme]-L-cysteine + [acceptor protein]-L-lysine = [E2 ubiquitin-conjugating enzyme]-L-cysteine + N(6)-ubiquitinyl-[acceptor protein]-L-lysine.. It participates in protein modification; protein ubiquitination. In terms of biological role, RING-finger E3 ubiquitin-protein ligase that plays an major role in maintaining COP1 homeostasis in darkness. Negatively regulates COP1 protein accumulation by targeting COP1 for ubiquitination and subsequent proteasomal degradation in dark-grown seedlings. Negatively regulates the accumulation of SPA1 protein in the dark. The protein is E3 ubiquitin-protein ligase CSU1 of Arabidopsis thaliana (Mouse-ear cress).